The following is a 596-amino-acid chain: Arginine--tRNA ligase (596 aa).

A 'HIGH' region motif is present at residues 139-149 (ANPTGPLHVGH).

This sequence belongs to the class-I aminoacyl-tRNA synthetase family. As to quaternary structure, monomer.

The protein localises to the cytoplasm. The enzyme catalyses tRNA(Arg) + L-arginine + ATP = L-arginyl-tRNA(Arg) + AMP + diphosphate. The protein is Arginine--tRNA ligase of Paraburkholderia phytofirmans (strain DSM 17436 / LMG 22146 / PsJN) (Burkholderia phytofirmans).